The following is a 1284-amino-acid chain: Kinesin-like protein KIN-4C (1284 aa).

The Kinesin motor domain maps to 12-364; that stretch reads SVKVVVNIRP…LKYANRARNI (353 aa). Residue 91–98 participates in ATP binding; sequence GQTGSGKT. Coiled coils occupy residues 407-445, 561-711, and 911-950; these read SAAL…EQLA, RDHS…QFRS, and MCKE…NMLL. 2 disordered regions span residues 1040–1070 and 1158–1284; these read RRQT…SQEK and MSEK…NHLR. Residues 1043-1070 are compositionally biased toward polar residues; it reads TVSSHLNPNPGSGTTQKSAKSEMASQEK. Composition is skewed to basic and acidic residues over residues 1158–1172 and 1275–1284; these read MSEK…RKPL and NANEKENHLR.

The protein belongs to the TRAFAC class myosin-kinesin ATPase superfamily. Kinesin family. KIN-4 subfamily. As to quaternary structure, homodimer.

In terms of biological role, microtubule-dependent motor protein involved in the control of the oriented deposition of cellulose microfibrils. This Oryza sativa subsp. japonica (Rice) protein is Kinesin-like protein KIN-4C.